A 538-amino-acid chain; its full sequence is Probable cytochrome P450 309a2 (538 aa).

Position 483 (C483) interacts with heme.

Belongs to the cytochrome P450 family. Requires heme as cofactor.

It is found in the endoplasmic reticulum membrane. It localises to the microsome membrane. Its function is as follows. May be involved in the metabolism of insect hormones and in the breakdown of synthetic insecticides. The protein is Probable cytochrome P450 309a2 (Cyp309a2) of Drosophila melanogaster (Fruit fly).